A 446-amino-acid chain; its full sequence is Coagulation factor VII (446 aa).

The signal sequence occupies residues 1-24 (MVPQTHGLLLLYFLLQLQGPLGAV). Positions 25–41 (VFITQEEAHGVLHRQRR) are excised as a propeptide. Residues 42 to 86 (ANSLLEELWSSSLERECNEERCSFEEAREIFKSPERTKQFWTIYS) enclose the Gla domain. 4-carboxyglutamate is present on residues glutamate 47, glutamate 48, glutamate 55, glutamate 57, glutamate 60, glutamate 61, glutamate 66, glutamate 67, glutamate 70, and glutamate 76. The cysteines at positions 58 and 63 are disulfide-linked. The EGF-like 1; calcium-binding domain occupies 87–123 (DGDQCASNPCQNGGTCQDHLKSYVCFCPLDFEGRNCE). Cystine bridges form between cysteine 91–cysteine 102, cysteine 96–cysteine 111, cysteine 113–cysteine 122, cysteine 132–cysteine 143, cysteine 139–cysteine 153, cysteine 155–cysteine 168, cysteine 176–cysteine 303, cysteine 200–cysteine 205, cysteine 219–cysteine 235, and cysteine 351–cysteine 370. A glycan (O-linked (Glc...) serine; alternate) is linked at serine 93. A glycan (O-linked (Xyl...) serine; alternate) is linked at serine 93. O-linked (Fuc) threonine glycosylation occurs at threonine 101. Aspartate 104 is subject to (3R)-3-hydroxyaspartate. The EGF-like 2 domain occupies 128 to 169 (EQLICANENGDCDQYCRDHVGTKRTCSCHEDYVLQPDEVSCK). The N-linked (GlcNAc...) asparagine glycan is linked to asparagine 186. The Peptidase S1 domain occupies 194–433 (IVGGYVCPKG…YIDWLVKYMD (240 aa)). Histidine 234 acts as the Charge relay system in catalysis. Asparagine 244 is a glycosylation site (N-linked (GlcNAc...) asparagine). The Charge relay system role is filled by aspartate 283. Substrate is bound at residue aspartate 379. Cysteine 381 and cysteine 409 form a disulfide bridge. The active-site Charge relay system is the serine 385.

Belongs to the peptidase S1 family. As to quaternary structure, heterodimer of a light chain and a heavy chain linked by a disulfide bond. In terms of processing, the vitamin K-dependent, enzymatic carboxylation of some glutamate residues allows the modified protein to bind calcium. Post-translationally, the iron and 2-oxoglutarate dependent 3-hydroxylation of aspartate and asparagine is (R) stereospecific within EGF domains. Can be either O-glucosylated or O-xylosylated at Ser-93 by POGLUT1. As to expression, plasma.

The protein localises to the secreted. The enzyme catalyses Selective cleavage of Arg-|-Ile bond in factor X to form factor Xa.. Its function is as follows. Initiates the extrinsic pathway of blood coagulation. Serine protease that circulates in the blood in a zymogen form. Factor VII is converted to factor VIIa by factor Xa, factor XIIa, factor IXa, or thrombin by minor proteolysis. In the presence of tissue factor and calcium ions, factor VIIa then converts factor X to factor Xa by limited proteolysis. Factor VIIa also converts factor IX to factor IXa in the presence of tissue factor and calcium. The sequence is that of Coagulation factor VII (F7) from Rattus norvegicus (Rat).